The following is a 511-amino-acid chain: 2,3-bisphosphoglycerate-independent phosphoglycerate mutase (511 aa).

Residues Asp-14 and Ser-64 each contribute to the Mn(2+) site. The Phosphoserine intermediate role is filled by Ser-64. Residues His-125, 155 to 156 (RD), Arg-187, Arg-193, 259 to 262 (RADR), and Lys-333 contribute to the substrate site. The Mn(2+) site is built by Asp-400, His-404, Asp-441, His-442, and His-460.

Belongs to the BPG-independent phosphoglycerate mutase family. As to quaternary structure, monomer. Mn(2+) serves as cofactor.

It carries out the reaction (2R)-2-phosphoglycerate = (2R)-3-phosphoglycerate. It functions in the pathway carbohydrate degradation; glycolysis; pyruvate from D-glyceraldehyde 3-phosphate: step 3/5. Catalyzes the interconversion of 2-phosphoglycerate and 3-phosphoglycerate. The sequence is that of 2,3-bisphosphoglycerate-independent phosphoglycerate mutase from Pseudoalteromonas atlantica (strain T6c / ATCC BAA-1087).